The chain runs to 463 residues: Adenosylhomocysteinase (463 aa).

Positions 54, 129, and 189 each coordinate substrate. Residue 190–192 coordinates NAD(+); that stretch reads TTT. Substrate is bound by residues Lys-219 and Asp-223. Residues Asn-224, 253–258, Glu-276, Asn-311, 332–334, and Asn-377 contribute to the NAD(+) site; these read GYGDVG and IGH.

The protein belongs to the adenosylhomocysteinase family. Requires NAD(+) as cofactor.

It is found in the cytoplasm. It carries out the reaction S-adenosyl-L-homocysteine + H2O = L-homocysteine + adenosine. The protein operates within amino-acid biosynthesis; L-homocysteine biosynthesis; L-homocysteine from S-adenosyl-L-homocysteine: step 1/1. Its function is as follows. May play a key role in the regulation of the intracellular concentration of adenosylhomocysteine. This chain is Adenosylhomocysteinase, found in Caulobacter vibrioides (strain ATCC 19089 / CIP 103742 / CB 15) (Caulobacter crescentus).